Consider the following 197-residue polypeptide: Imidazoleglycerol-phosphate dehydratase (197 aa).

It belongs to the imidazoleglycerol-phosphate dehydratase family.

It is found in the cytoplasm. The catalysed reaction is D-erythro-1-(imidazol-4-yl)glycerol 3-phosphate = 3-(imidazol-4-yl)-2-oxopropyl phosphate + H2O. The protein operates within amino-acid biosynthesis; L-histidine biosynthesis; L-histidine from 5-phospho-alpha-D-ribose 1-diphosphate: step 6/9. The chain is Imidazoleglycerol-phosphate dehydratase from Nitrosomonas europaea (strain ATCC 19718 / CIP 103999 / KCTC 2705 / NBRC 14298).